The chain runs to 882 residues: DNA mismatch repair protein MutS (882 aa).

ATP is bound at residue 640–647; the sequence is GPNMGGKS.

This sequence belongs to the DNA mismatch repair MutS family.

In terms of biological role, this protein is involved in the repair of mismatches in DNA. It is possible that it carries out the mismatch recognition step. This protein has a weak ATPase activity. In Albidiferax ferrireducens (strain ATCC BAA-621 / DSM 15236 / T118) (Rhodoferax ferrireducens), this protein is DNA mismatch repair protein MutS.